Reading from the N-terminus, the 701-residue chain is F-box/LRR-repeat protein 17 (701 aa).

A compositionally biased stretch (basic and acidic residues) spans 1–11 (MGHLLSKEPRN). Disordered stretches follow at residues 1–20 (MGHL…RPRC), 72–94 (APAG…YAAA), and 227–300 (GGGG…DADC). A compositionally biased stretch (gly residues) spans 227 to 237 (GGGGGPAGGGA). Residues 252–264 (EQPPQPLCPPPSS) show a composition bias toward pro residues. One can recognise an F-box domain in the interval 318-365 (TPDINQLPPSILLKIFSNLSLDERCLSASLVCKYWRDLCLDFQFWKQL).

Belongs to the FBXL17 family. As to quaternary structure, part of the SCF (SKP1-CUL1-F-box) E3 ubiquitin-protein ligase complex SCF(FBXL17) composed of CUL1, SKP1, RBX1 and FBXL17. Interacts with BTB domain-containing proteins such as KLHL12, BCL6 and BACH1; specifically recognizes and binds a conserved degron of non-consecutive residues present at the interface of BTB dimers of aberrant composition. Interacts with SUFU. Interacts with PRMT1.

Its subcellular location is the cytoplasm. The protein resides in the nucleus. Substrate-recognition component of the SCF(FBXL17) E3 ubiquitin ligase complex, a key component of a quality control pathway required to ensure functional dimerization of BTB domain-containing proteins (dimerization quality control, DQC). FBXL17 specifically recognizes and binds a conserved degron of non-consecutive residues present at the interface of BTB dimers of aberrant composition: aberrant BTB dimer are then ubiquitinated by the SCF(FBXL17) complex and degraded by the proteasome. The ability of the SCF(FBXL17) complex to eliminate compromised BTB dimers is required for the differentiation and survival of neural crest and neuronal cells. The SCF(FBXL17) complex mediates ubiquitination and degradation of BACH1. The SCF(FBXL17) complex is also involved in the regulation of the hedgehog/smoothened (Hh) signaling pathway by mediating the ubiquitination and degradation of SUFU, allowing the release of GLI1 from SUFU for proper Hh signal transduction. The SCF(FBXL17) complex mediates ubiquitination and degradation of PRMT1. This Homo sapiens (Human) protein is F-box/LRR-repeat protein 17.